A 191-amino-acid chain; its full sequence is Protein YceI (191 aa).

Positions 1 to 22 (MKKNLLGFTLASLLFTTGSAVA) are cleaved as a signal peptide.

Belongs to the UPF0312 family. Type 1 subfamily.

The protein resides in the periplasm. This chain is Protein YceI, found in Salmonella newport (strain SL254).